The chain runs to 680 residues: DNA ligase (680 aa).

Position 32-36 (32-36 (DTVYD)) interacts with NAD(+). The disordered stretch occupies residues 47–66 (QNDPGLQRPDSPTQRVGGAP). NAD(+)-binding positions include 81–82 (SL) and Glu-115. Lys-117 (N6-AMP-lysine intermediate) is an active-site residue. NAD(+) contacts are provided by Arg-138, Glu-175, Lys-291, and Lys-315. Cys-409, Cys-412, Cys-427, and Cys-432 together coordinate Zn(2+). Residues 602 to 680 (DADGVLQGKT…EADLTALLQP (79 aa)) enclose the BRCT domain.

It belongs to the NAD-dependent DNA ligase family. LigA subfamily. Mg(2+) serves as cofactor. The cofactor is Mn(2+).

The enzyme catalyses NAD(+) + (deoxyribonucleotide)n-3'-hydroxyl + 5'-phospho-(deoxyribonucleotide)m = (deoxyribonucleotide)n+m + AMP + beta-nicotinamide D-nucleotide.. In terms of biological role, DNA ligase that catalyzes the formation of phosphodiester linkages between 5'-phosphoryl and 3'-hydroxyl groups in double-stranded DNA using NAD as a coenzyme and as the energy source for the reaction. It is essential for DNA replication and repair of damaged DNA. This chain is DNA ligase, found in Synechococcus sp. (strain CC9605).